The following is a 418-amino-acid chain: Tyrosine--tRNA ligase (418 aa).

Tyr-38 is an L-tyrosine binding site. Positions 43-52 (CTAKSLHVGS) match the 'HIGH' region motif. Residues Tyr-175 and Gln-179 each coordinate L-tyrosine. A 'KMSKS' region motif is present at residues 235-239 (KMGKT). An ATP-binding site is contributed by Lys-238. One can recognise an S4 RNA-binding domain in the interval 348–413 (LPIIKLLQIS…CGKKRHLKIM (66 aa)).

Belongs to the class-I aminoacyl-tRNA synthetase family. TyrS type 1 subfamily. In terms of assembly, homodimer.

It is found in the cytoplasm. It catalyses the reaction tRNA(Tyr) + L-tyrosine + ATP = L-tyrosyl-tRNA(Tyr) + AMP + diphosphate + H(+). In terms of biological role, catalyzes the attachment of tyrosine to tRNA(Tyr) in a two-step reaction: tyrosine is first activated by ATP to form Tyr-AMP and then transferred to the acceptor end of tRNA(Tyr). This chain is Tyrosine--tRNA ligase, found in Ehrlichia canis (strain Jake).